The following is a 400-amino-acid chain: Phosphoglycerate kinase (400 aa).

Residues 23-25, arginine 38, 61-64, arginine 120, and arginine 153 contribute to the substrate site; these read DLN and HFGR. ATP contacts are provided by residues lysine 203, glutamate 325, and 355–358; that span reads GGDT.

Belongs to the phosphoglycerate kinase family. In terms of assembly, monomer.

The protein localises to the cytoplasm. It carries out the reaction (2R)-3-phosphoglycerate + ATP = (2R)-3-phospho-glyceroyl phosphate + ADP. Its pathway is carbohydrate degradation; glycolysis; pyruvate from D-glyceraldehyde 3-phosphate: step 2/5. The sequence is that of Phosphoglycerate kinase from Agrobacterium fabrum (strain C58 / ATCC 33970) (Agrobacterium tumefaciens (strain C58)).